A 127-amino-acid polypeptide reads, in one-letter code: Thioredoxin domain-containing protein 8 (127 aa).

The region spanning 2–127 (VQKIKSMREF…KLEEKIQELM (126 aa)) is the Thioredoxin domain. A disulfide bond links Cys32 and Cys35.

The protein belongs to the thioredoxin family. As to expression, testis-specific. Expressed in spermatozoa, sperm tail, elongated and round spermatids.

The protein resides in the cytoplasm. Its subcellular location is the golgi apparatus. Its function is as follows. May be required for post-translational modifications of proteins required for acrosomal biogenesis. May act by reducing disulfide bonds within the sperm. This Rattus norvegicus (Rat) protein is Thioredoxin domain-containing protein 8 (Txndc8).